We begin with the raw amino-acid sequence, 205 residues long: Proteasome subunit beta type-3 (205 aa).

Ser2 carries the post-translational modification N-acetylserine. Position 77 is an N6-acetyllysine (Lys77).

Belongs to the peptidase T1B family. As to quaternary structure, the 26S proteasome consists of a 20S proteasome core and two 19S regulatory subunits. The 20S proteasome core is a barrel-shaped complex made of 28 subunits that are arranged in four stacked rings. The two outer rings are each formed by seven alpha subunits, and the two inner rings are formed by seven beta subunits. The proteolytic activity is exerted by three beta-subunits PSMB5, PSMB6 and PSMB7. In terms of assembly, (Microbial infection) Interacts with HIV-1 TAT protein.

The protein resides in the cytoplasm. It is found in the nucleus. Its function is as follows. Non-catalytic component of the 20S core proteasome complex involved in the proteolytic degradation of most intracellular proteins. This complex plays numerous essential roles within the cell by associating with different regulatory particles. Associated with two 19S regulatory particles, forms the 26S proteasome and thus participates in the ATP-dependent degradation of ubiquitinated proteins. The 26S proteasome plays a key role in the maintenance of protein homeostasis by removing misfolded or damaged proteins that could impair cellular functions, and by removing proteins whose functions are no longer required. Associated with the PA200 or PA28, the 20S proteasome mediates ubiquitin-independent protein degradation. This type of proteolysis is required in several pathways including spermatogenesis (20S-PA200 complex) or generation of a subset of MHC class I-presented antigenic peptides (20S-PA28 complex). The polypeptide is Proteasome subunit beta type-3 (Homo sapiens (Human)).